Here is a 453-residue protein sequence, read N- to C-terminus: Secreted triacylglycerol lipase LIP3 (453 aa).

A signal peptide spans 1-19; sequence MKLGIVAFTLISFAAQALA. Asn-98 carries N-linked (GlcNAc...) asparagine glycosylation. Cysteines 115 and 284 form a disulfide. The active-site Nucleophile is Ser-197. Residue Asn-230 is glycosylated (N-linked (GlcNAc...) asparagine). Catalysis depends on residues Asp-344 and His-378. The cysteines at positions 360 and 406 are disulfide-linked.

This sequence belongs to the AB hydrolase superfamily. Lipase family. Class Lip subfamily.

It is found in the secreted. It localises to the cell wall. It catalyses the reaction a triacylglycerol + H2O = a diacylglycerol + a fatty acid + H(+). It carries out the reaction a monoacylglycerol + H2O = glycerol + a fatty acid + H(+). The enzyme catalyses a diacylglycerol + H2O = a monoacylglycerol + a fatty acid + H(+). Functionally, secreted lipase involved in Dandruff and seborrheic dermatitis (D/SD) probably via lipase-mediated breakdown of sebaceous lipids and release of irritating free fatty acids. Has triacylglycerol lipase activity and is able to hydrolyze triolein, tristearin, trilinolein, tripalmitoylglycerol and trihexadecenoin. Hydrolyzes diacylglycerols such as distearin, dilinolein, dipalmitoylglycerol and dipalmitolein. Mostly converts monoolein to di- and triolein, while free fatty acids are only produced in low amounts. The protein is Secreted triacylglycerol lipase LIP3 of Malassezia globosa (strain ATCC MYA-4612 / CBS 7966) (Dandruff-associated fungus).